Here is a 3013-residue protein sequence, read N- to C-terminus: MSTLPKPQKRNQRNTNRRPQDVKFPGGGQIVGGVYLLPRRGPRLGVRATRKTSERSQPRGRRQPIPKARRQTGRTWAQPGYPWPLYGNEGCGWMGWLLSPRGSRPHWGPNDPRRRSRNLGKVIDTLTCGFADLMGYIPVVGAPLGGVAAALAHGVRAVEDGINYATGNLPGCSFSIFLLALLSCLTTPASAVHYANKSGIYHLTNDCPNSSIVYEAEDFIMHLPGCVPCIKSGNGSSCWLPATLTIAVPNASIPVRGFRRHVDLMVGAAAFCSAMYVGDLCGGIFLVGQLFSFNPRRHWVVQDCNCSIYVGHITGHRMAWDMMMNWSPTATLVLSYVMRIPQVIMDIFTGGHWGILAGILYYSMVANWAKVLCILFLFAGVDATTRTTGAQAARATLGFTGLFQTGAKQNIHLINTNGSWHINRTALNCNDSLNTGFMAALFYLHKFNSTGCPERLSACKSITQFAQGWGPVTYANVSGSSEDRPYCWHYAPRPCGVVSARSVCGPVYCFTPSPVVVGTTDRRGVPTYTWGENESDVFLLESLRPPAGAWYGCTWMNSTGYTKTCGAPPCHIGPPDQFCPTDCFRKHPEATYRKCGSGPWLTPRCLVDYPYRLWHYPCTVNYTIHKVRLFINGLEHRFDAACNWTRGERCELEDRDRIEMSPLLFSTTELAILPCSFTTMPALSTGLVHLHQNIVDIQYLYGLAPALVSWAVRWEYVVLAFLLLADARICACLWMVLLISQVEAALENLIVLNAASAASSQGWIYCLVFICCAWYIKGRVVPGATYAILHLWPLLLLVLALPQRAYAQDREQGASIGVVVIAAITIFTLTPAYKTMLVHFLWWNQYFIARSEALIQQWVPSLRVRGGRDAVILLTCLLHPSLGFDITKMLLALLGPLYLLQVSLLRVPYYVRAHALLRVCILVRRVAGGKYIQAALLKLGAWTGTYIYDHLAPLSTWASDGLRDLAVAVEPVTFSPMEKKIITWGADTAACGDILAGLPVSARLGHLLFLGPADDMKSMGWRLLAPITAYCQQTRGLLGTIVTSLTGRDRNVVEGEIQVLSTATQSFLGTAINGVMWTVYHGAGSKTLAGPKGPVCQMYTNVDQDMVGWPAPPGTRSLTPCTCGASDLYLVTRNADVIPARRRGDTRAGLLSPRPLSTLKGSSGGPLMCPSDHVVGLFRAAVCTRGVAKALDFVPVENMETTMRSPVFTDNSTPPAVPQTYQVGYLHAPTGSGKSTKVPAAYASQGYKVLVLNPSVAATLGFGSYMSTAHGIDPNIRTGVRTITTGGPITYSTYGKFLADGGCSGGAYDIIICDECHSTDPTTVLGIGTVLDQAETAGVRLTVLATATPPGSVTVPHPNITETALPSTGEVPFYGKAIPLECIKGGRHLIFCHSKKKCDELAKQLRTLGLNAVAFYRGVDVSVIPTAGDVVVCATDALMTGYTGDFDSVIDCNVAVTQIVDFSLDPTFSIETTTVPQDAVARSQRRGRTGRGKPGVYRYVSQGERPSGMFDTVVLCEAYDVGCAWYELTPSETTVRLRAYLNTPGLPVCQDHLEFWEGVFTGMTHIDAHFLSQTKQGGENFAYLVAYQATVCARAKAPPPSWDTMWKCLIRLKPMLTGPTPLLYRLGAVQNEIITTHPITKYIMTCMAADLEVITSTWVLAGGIVAALAAYCLTVGSVVICGRIVTSGKPVPLPDREVLYRQFDEMEECSRHIPYLAEGQQIAEQFKQKILGLLQNTAKQAEDLKPAVQSAWPKLEQFWQKHLWNFVSGVQYLAGLSTLPGNPAVASLMSFSAALTSPLSTSTTLLLNILGGWVASQLAPPTASTAFVVSGLAGAAVGSIGLGKVIIDILAGYGAGVSGALVAFKIMSGEAPAVEDMVNLLPALLSPGALVVGVVCAAVLRRHVGPSEGATQWMNRLIAFASRGNHVSPTHYVPETDASRAVTTILSSLTITSLLRRLHEWISGDWSAPCSCSWLKDVWDWVCTVLSDFKTWLRAKLVPTLPGIPFISCQRGFRGVWRGDGVNYTTCSCGANITGHVKNGSMKIVGPKMCSNVWNNRFPINAITTGPSVPVPEPNYHKALWRVSAEDYVEVVRVNDHHYIVGATADNLKCPCQVPAPEFFTEVDGVRLHRFAPPCRPLMRDDITFSVGLSTYVVGSQLPCEPEPDVVILTSMLTDPDHITAETAARRLARGSPPSLASSSASQLSAPSLKATCTTAGKHPDAELIEANLLWRQEVGGNITRVESENKIIVLDSFDPLIAETDDREISVGAECFNPPRPKFPPALPVWARPDYNPPLLQPWKAPDYEPPLVHGCALPPKGLPPVPPPRKKRVVQLDEGSAKRALAELAQTSFPPSTATLSEDSGRETSTLSSDMTPPREEADRASDDGSYSSMPPLEGEPGDPDLSSGSWSTVSEDHDSVVCCSMSYSWTGALITPCAAEEEKLPISPLSNALIRHHNLVYSTTSRSASLRQKKVTFDRVQVVDQHYYDVLKEIKTKASGVSAKLLSVEEACALTPPHSARSKFGYGAKEVRGLASKAVNHINSVWEDLLEDNSTPIPTTIMAKNEVFCVDAQKGGRKPARLIVYPDLGVRVCEKRALYDVTQKLPIAVMGAAYGFQYSPKQRVDYLLKMWRSKKTPMGFSYDTRCFDSTVTERDIRTEEDIYQCCQLDPVAKKAITSLTERLYCGGPMYNSRGQSCGYRRCRASGVLTTSLGNTLTCYLKAQAACRAAKLKDFDMLVCGDDLVVISESMGVAEDASALRAFTEAMTRYSAPPGDDPQPEYDLELITSCSSNVSVAHDGAGQRYYYLTRDPLTPLSRAAWETARHTPVNSWLGNIIMYAPTIWVRMVLMTHFFAILQSQEILHKALDFDMYGVTYSVTPLDLPYIIQRLHGMAAFSLHGYSPGELNRVASCLRKLGAPPLRAWRHRARAVRAKLIAQGGKHAICGKYLFNWAVRTKLKLTPLRGAANLDLSGWFVSGGSGGDIFHSVSRARPRNLLLCLLLLTVGVGIFLLPAR.

S2 is subject to N-acetylserine; by host. Residues 2-23 (STLPKPQKRNQRNTNRRPQDVK) are interaction with STAT1. The interval 2-58 (STLPKPQKRNQRNTNRRPQDVKFPGGGQIVGGVYLLPRRGPRLGVRATRKTSERSQP) is interaction with EIF2AK2/PKR. An interaction with DDX3X region spans residues 2-59 (STLPKPQKRNQRNTNRRPQDVKFPGGGQIVGGVYLLPRRGPRLGVRATRKTSERSQPR). The tract at residues 2-75 (STLPKPQKRN…PKARRQTGRT (74 aa)) is disordered. Residues 2-168 (STLPKPQKRN…EDGINYATGN (167 aa)) are Cytoplasmic-facing. 2 consecutive short sequence motifs (nuclear localization signal) follow at residues 5 to 13 (PKPQKRNQR) and 38 to 43 (PRRGPR). Positions 7-16 (PQKRNQRNTN) are enriched in basic residues. Positions 32 to 47 (GGVYLLPRRGPRLGVR) are enriched in low complexity. S53 carries the post-translational modification Phosphoserine; by host. 2 consecutive short sequence motifs (nuclear localization signal) follow at residues 58 to 64 (PRGRRQP) and 66 to 71 (PKARRQ). Over residues 58–72 (PRGRRQPIPKARRQT) the composition is skewed to basic residues. S99 and S116 each carry phosphoserine; by host. The interval 112–152 (PRRRSRNLGKVIDTLTCGFADLMGYIPVVGAPLGGVAAALA) is important for endoplasmic reticulum and mitochondrial localization. Residues 122 to 173 (VIDTLTCGFADLMGYIPVVGAPLGGVAAALAHGVRAVEDGINYATGNLPGCS) form an interaction with APOA2 region. Positions 164–167 (YATG) are important for lipid droplets localization. Residues 169–189 (LPGCSFSIFLLALLSCLTTPA) traverse the membrane as a helical segment. Residues 178–191 (LLALLSCLTTPASA) constitute a propeptide, ER anchor for the core protein, removed in mature form by host signal peptidase. Topologically, residues 190 to 358 (SAVHYANKSG…TGGHWGILAG (169 aa)) are lumenal. N-linked (GlcNAc...) asparagine; by host glycosylation is found at N196, N209, N234, and N250. An important for fusion region spans residues 265-296 (MVGAAAFCSAMYVGDLCGGIFLVGQLFSFNPR). Residue N305 is glycosylated (N-linked (GlcNAc...) asparagine; by host). The helical transmembrane segment at 359–379 (ILYYSMVANWAKVLCILFLFA) threads the bilayer. At 380-723 (GVDATTRTTG…WEYVVLAFLL (344 aa)) the chain is on the lumenal side. The segment at 385 to 412 (TRTTGAQAARATLGFTGLFQTGAKQNIH) is HVR1. N-linked (GlcNAc...) (high mannose) asparagine; by host glycans are attached at residues N417, N423, and N430. 4 disulfides stabilise this stretch: C429–C553, C452–C459, C487–C495, and C504–C509. A glycan (N-linked (GlcNAc...) asparagine; by host) is linked at N448. An HVR2 region spans residues 475–479 (ANVSG). An N-linked (GlcNAc...) asparagine; by host glycan is attached at N476. The segment at 481–494 (SEDRPYCWHYAPRP) is CD81-binding 1. The N-linked (GlcNAc...) asparagine; by host glycan is linked to N533. Residues 545 to 552 (PPAGAWYG) form a CD81-binding 2 region. An N-linked (GlcNAc...) asparagine; by host glycan is attached at N557. 4 disulfide bridges follow: C565/C570, C579/C583, C595/C618, and C605/C642. Residues N621 and N643 are each glycosylated (N-linked (GlcNAc...) (high mannose) asparagine; by host). A disulfide bridge connects residues C650 and C675. The tract at residues 658-669 (IEMSPLLFSTTE) is PKR/eIF2-alpha phosphorylation homology domain (PePHD). Residues 724-744 (LADARICACLWMVLLISQVEA) traverse the membrane as a helical segment. Residues 745 to 755 (ALENLIVLNAA) lie on the Lumenal side of the membrane. A helical transmembrane segment spans residues 756–776 (SAASSQGWIYCLVFICCAWYI). The Cytoplasmic segment spans residues 777–780 (KGRV). Residues 781–801 (VPGATYAILHLWPLLLLVLAL) form a helical membrane-spanning segment. Residues 802 to 811 (PQRAYAQDRE) are Lumenal-facing. A helical membrane pass occupies residues 812–832 (QGASIGVVVIAAITIFTLTPA). At 833-879 (YKTMLVHFLWWNQYFIARSEALIQQWVPSLRVRGGRDAVILLTCLLH) the chain is on the cytoplasmic side. Residues 880–900 (PSLGFDITKMLLALLGPLYLL) form a helical membrane-spanning segment. Residues 901 to 926 (QVSLLRVPYYVRAHALLRVCILVRRV) are Lumenal-facing. In terms of domain architecture, Peptidase C18 spans 901 to 1024 (QVSLLRVPYY…DMKSMGWRLL (124 aa)). A protease NS2-3 region spans residues 902–1204 (VSLLRVPYYV…PVENMETTMR (303 aa)). A lipid anchor (S-palmitoyl cysteine; by host) is attached at C920. A helical transmembrane segment spans residues 927–947 (AGGKYIQAALLKLGAWTGTYI). The segment at 927 to 947 (AGGKYIQAALLKLGAWTGTYI) is interaction with host SCPS1. Residues 948–1655 (YDHLAPLSTW…CMAADLEVIT (708 aa)) lie on the Cytoplasmic side of the membrane. Active-site for protease NS2 activity; shared with dimeric partner residues include H950, E970, and C991. Residues 1025-1206 (APITAYCQQT…ENMETTMRSP (182 aa)) enclose the Peptidase S29 domain. Catalysis depends on charge relay system; for serine protease NS3 activity residues H1081 and D1105. C1121 and C1123 together coordinate Zn(2+). Catalysis depends on S1163, which acts as the Charge relay system; for serine protease NS3 activity. C1169 and H1173 together coordinate Zn(2+). Positions 1215-1367 (PAVPQTYQVG…PNITETALPS (153 aa)) constitute a Helicase ATP-binding domain. Residue 1228–1235 (APTGSGKS) coordinates ATP. Positions 1235 and 1315 each coordinate Mg(2+). The DECH box signature appears at 1314–1317 (DECH). The region spanning 1374-1536 (YGKAIPLECI…ELTPSETTVR (163 aa)) is the Helicase C-terminal domain. Residues 1484-1496 (QRRGRTGRGKPGV) are RNA-binding. The helical transmembrane segment at 1656 to 1676 (STWVLAGGIVAALAAYCLTVG) threads the bilayer. Positions 1677–1688 (SVVICGRIVTSG) are NS3-binding. Topologically, residues 1677-1803 (SVVICGRIVT…ALTSPLSTST (127 aa)) are cytoplasmic. A helical membrane pass occupies residues 1804–1824 (TLLLNILGGWVASQLAPPTAS). Residues 1825–1826 (TA) lie on the Lumenal side of the membrane. A helical membrane pass occupies residues 1827–1847 (FVVSGLAGAAVGSIGLGKVII). Residue D1848 is a topological domain, cytoplasmic. The chain crosses the membrane as a helical span at residues 1849–1869 (ILAGYGAGVSGALVAFKIMSG). Topologically, residues 1870–1879 (EAPAVEDMVN) are lumenal. A helical membrane pass occupies residues 1880–1900 (LLPALLSPGALVVGVVCAAVL). The Cytoplasmic portion of the chain corresponds to 1901 to 1970 (RRHVGPSEGA…WISGDWSAPC (70 aa)). C1970 is lipidated: S-palmitoyl cysteine; by host. Residues 1971–2000 (SCSWLKDVWDWVCTVLSDFKTWLRAKLVPT) lie within the membrane without spanning it. Residues 2001–2992 (LPGIPFISCQ…FHSVSRARPR (992 aa)) lie on the Cytoplasmic side of the membrane. Zn(2+)-binding residues include C2009, C2027, C2029, and C2050. Positions 2118–2206 (EFFTEVDGVR…ASSSASQLSA (89 aa)) are FKBP8-binding. Positions 2118-2331 (EFFTEVDGVR…PVPPPRKKRV (214 aa)) are transcriptional activation. The interval 2133–2137 (PPCRP) is interaction with non-structural protein 4A. The segment at 2187-2440 (RLARGSPPSL…ALITPCAAEE (254 aa)) is interaction with host SKP2. Phosphoserine; by host is present on residues S2192, S2195, S2199, S2202, S2205, and S2208. Residues 2208-2247 (SLKATCTTAGKHPDAELIEANLLWRQEVGGNITRVESENK) are ISDR. Positions 2208–2273 (SLKATCTTAG…REISVGAECF (66 aa)) are interaction with EIF2AK2/PKR. Residues 2247-2305 (KIIVLDSFDPLIAETDDREISVGAECFNPPRPKFPPALPVWARPDYNPPLLQPWKAPDY) are NS4B-binding. A V3 region spans residues 2298 to 2376 (QPWKAPDYEP…STLSSDMTPP (79 aa)). Residues 2316–2411 (PPKGLPPVPP…PDLSSGSWST (96 aa)) are disordered. The short motif at 2321–2324 (PPVP) is the SH3-binding element. Positions 2326–2334 (PRKKRVVQL) match the Nuclear localization signal motif. A compositionally biased stretch (polar residues) spans 2347-2373 (AQTSFPPSTATLSEDSGRETSTLSSDM). A compositionally biased stretch (basic and acidic residues) spans 2375 to 2385 (PPREEADRASD). S2464 carries the phosphoserine; by host modification. Positions 2636-2754 (PMGFSYDTRC…ISESMGVAED (119 aa)) constitute a RdRp catalytic domain. Residues D2642, D2740, and D2741 each coordinate Mg(2+). Residues 2993 to 3013 (NLLLCLLLLTVGVGIFLLPAR) form a helical membrane-spanning segment.

It belongs to the hepacivirus polyprotein family. In terms of assembly, homooligomer. Interacts with E1 (via C-terminus). Interacts with the non-structural protein 5A. Interacts (via N-terminus) with host STAT1 (via SH2 domain); this interaction results in decreased STAT1 phosphorylation and ubiquitin-mediated proteasome-dependent STAT1 degradation, leading to decreased IFN-stimulated gene transcription. Interacts with host STAT3; this interaction constitutively activates STAT3. Interacts with host LTBR receptor. Interacts with host TNFRSF1A receptor and possibly induces apoptosis. Interacts with host HNRPK. Interacts with host YWHAE. Interacts with host UBE3A/E6AP. Interacts with host DDX3X. Interacts with host APOA2. Interacts with host RXRA protein. Interacts with host SP110 isoform 3/Sp110b; this interaction sequesters the transcriptional corepressor SP110 away from the nucleus. Interacts with host CREB3 nuclear transcription protein; this interaction triggers cell transformation. Interacts with host ACY3. Interacts with host C1QR1. Interacts with host RBM24; this interaction, which enhances the interaction of the mature core protein with 5'-UTR, may inhibit viral translation and favor replication. Interacts with host EIF2AK2/PKR; this interaction induces the autophosphorylation of EIF2AK2. Part of the viral assembly initiation complex composed of NS2, E1, E2, NS3, NS4A, NS5A and the mature core protein. As to quaternary structure, forms a heterodimer with envelope glycoprotein E2. Interacts with mature core protein. Interacts with protease NS2. The heterodimer E1/E2 interacts with host CLDN1; this interaction plays a role in viral entry into host cell. Interacts with host SPSB2 (via C-terminus). Part of the viral assembly initiation complex composed of NS2, E1, E2, NS3, NS4A, NS5A and the mature core protein. Interacts with host NEURL3; this interaction prevents E1 binding to glycoprotein E2. Forms a heterodimer with envelope glycoprotein E1. Interacts with host CD81 and SCARB1 receptors; these interactions play a role in viral entry into host cell. Interacts with host EIF2AK2/PKR; this interaction inhibits EIF2AK2 and probably allows the virus to evade the innate immune response. Interacts with host CD209/DC-SIGN and CLEC4M/DC-SIGNR. Interact with host SPCS1; this interaction is essential for viral particle assembly. Interacts with protease NS2. The heterodimer E1/E2 interacts with host CLDN1; this interaction plays a role in viral entry into host cell. Part of the viral assembly initiation complex composed of NS2, E1, E2, NS3, NS4A, NS5A and the mature core protein. Interacts with host SLC3A2/4F2hc; the interaction may facilitate viral entry into host cell. Interacts with human PLSCR1. In terms of assembly, homohexamer. Homoheptamer. Interacts with protease NS2. As to quaternary structure, homodimer. Interacts with host SPCS1; this interaction is essential for viral particle assembly. Interacts with envelope glycoprotein E1. Interacts with envelope glycoprotein E2. Interacts with viroporin p7. Interacts with serine protease/helicase NS3. Part of the replication complex composed of NS2, NS3, NS4A, NS4B, NS5A and the RNA-directed RNA polymerase embedded in an ER-derived membranous web. Part of the viral assembly initiation complex composed of NS2, E1, E2, NS3, NS4A, NS5A and the mature core protein. Interacts with protease NS2. Interacts with non-structural protein 4A; this interaction stabilizes the folding of NS3 serine protease. NS3-NS4A interaction is essential for NS3 activation and allows membrane anchorage of the latter. NS3/NS4A complex also prevents phosphorylation of host IRF3, thus preventing the establishment of dsRNA induced antiviral state. Interacts with host MAVS; this interaction leads to the cleavage and inhibition of host MAVS. Interacts with host TICAM1; this interaction leads to the cleavage and inhibition of host TICAM1. Interacts with host TANK-binding kinase/TBK1; this interaction results in the inhibition of the association between TBK1 and IRF3, which leads to the inhibition of IRF3 activation. Interacts with host RBM24. Part of the replication complex composed of NS2, NS3, NS4A, NS4B, NS5A and the RNA-directed RNA polymerase embedded in an ER-derived membranous web. Part of the viral assembly initiation complex composed of NS2, E1, E2, NS3, NS4A, NS5A and the mature core protein. In terms of assembly, interacts with NS3 serine protease; this interaction stabilizes the folding of NS3 serine protease. NS3-NS4A interaction is essential for NS3 activation and allows membrane anchorage of the latter. Interacts with non-structural protein 5A (via N-terminus). Part of the replication complex composed of NS2, NS3, NS4A, NS4B, NS5A and the RNA-directed RNA polymerase embedded in an ER-derived membranous web. Part of the viral assembly initiation complex composed of NS2, E1, E2, NS3, NS4A, NS5A and the mature core protein. As to quaternary structure, homomultimer. Interacts with non-structural protein NS5A. Interacts with host PLA2G4C; this interaction likely initiates the recruitment of replication complexes to lipid droplets. Interacts with host STING; this interaction disrupts the interaction between STING and TBK1 thereby suppressing the interferon signaling. Part of the replication complex composed of NS2, NS3, NS4A, NS4B, NS5A and the RNA-directed RNA polymerase embedded in an ER-derived membranous web. Monomer. Homodimer; dimerization is required for RNA-binding. Interacts with the mature core protein. Interacts (via N-terminus) with non-structural protein 4A. Interacts with non-structural protein 4B. Interacts (via region D2) with RNA-directed RNA polymerase. Part of the viral assembly initiation complex composed of NS2, E1, E2, NS3, NS4A, NS5A and the mature core protein. Part of the replication complex composed of NS2, NS3, NS4A, NS4B, NS5A and the RNA-directed RNA polymerase embedded in an ER-derived membranous web. Interacts with host GRB2. Interacts with host BIN1. Interacts with host PIK3R1. Interacts with host SRCAP. Interacts with host FKBP8. Interacts (via C-terminus) with host VAPB (via MSP domain). Interacts with host EIF2AK2/PKR; this interaction leads to disruption of EIF2AK2 dimerization by NS5A and probably allows the virus to evade the innate immune response. Interacts (via N-terminus) with host PACSIN2 (via N-terminus); this interaction attenuates protein kinase C alpha-mediated phosphorylation of PACSIN2 by disrupting the interaction between PACSIN2 and PRKCA. Interacts (via N-terminus) with host SRC kinase (via SH2 domain). Interacts with most Src-family kinases. Interacts with host IFI27 and SKP2; promotes the ubiquitin-mediated proteasomal degradation of NS5A. Interacts with host GPS2. Interacts with host TNFRSF21; this interaction allows the modulation by the virus of JNK, p38 MAPK, STAT3, and Akt signaling pathways in a DR6-dependent manner. Interacts (via N-terminus) with host CIDEB (via N-terminus); this interaction seems to regulate the association of HCV particles with APOE. Interacts with host CHKA/Choline Kinase-alpha; CHKA bridges host PI4KA and NS5A and potentiates NS5A-stimulated PI4KA activity, which then facilitates the targeting of the ternary complex to the ER for viral replication. Interacts with host SPSB2 (via C-terminus); this interaction targets NS5A for ubiquitination and degradation. Interacts with host RAB18; this interaction may promote the association of NS5A and other replicase components with lipid droplets. Interacts (via region D2) with host PPIA/CYPA; the interaction stimulates RNA-binding ability of NS5A and is dependent on the peptidyl-prolyl cis-trans isomerase activity of PPIA/CYPA. Interacts with host TRIM14; this interaction induces the degradation of NS5A. In terms of assembly, homooligomer. Interacts with non-structural protein 5A. Interacts with host VAPB. Interacts with host PRK2/PKN2. Interacts with host HNRNPA1 and SEPT6; these interactions facilitate viral replication. Part of the replication complex composed of NS2, NS3, NS4A, NS4B, NS5A and the RNA-directed RNA polymerase. The cofactor is Zn(2+). Mg(2+) serves as cofactor. Specific enzymatic cleavages in vivo yield mature proteins. The structural proteins, core, E1, E2 and p7 are produced by proteolytic processing by host signal peptidases. The core protein precursor is synthesized as a 23 kDa, which is retained in the ER membrane through the hydrophobic signal peptide. Cleavage by the signal peptidase releases the 21 kDa mature core protein. The cleavage of the core protein precursor occurs between aminoacids 176 and 188 but the exact cleavage site is not known. Some degraded forms of the core protein appear as well during the course of infection. The other proteins (p7, NS2, NS3, NS4A, NS4B, NS5A and NS5B) are cleaved by the viral proteases. Autoprocessing between NS2 and NS3 is mediated by the NS2 cysteine protease catalytic domain and regulated by the NS3 N-terminal domain. In terms of processing, phosphorylated by host PKC and PKA. Post-translationally, ubiquitinated; mediated by UBE3A and leading to core protein subsequent proteasomal degradation. Highly N-glycosylated. In terms of processing, palmitoylation is required for NS2/3 autoprocessing and E2 recruitment to membranes. Post-translationally, palmitoylated. This modification may play a role in its polymerization or in protein-protein interactions. Phosphorylated on serines in a basal form termed p56. p58 is a hyperphosphorylated form of p56. p56 and p58 coexist in the cell in roughly equivalent amounts. Hyperphosphorylation is dependent on the presence of NS4A. Host CSNK1A1/CKI-alpha or RPS6KB1 kinases may be responsible for NS5A phosphorylation. In terms of processing, tyrosine phosphorylation is essential for the interaction with host SRC. Post-translationally, the N-terminus is phosphorylated by host PRK2/PKN2.

Its subcellular location is the host endoplasmic reticulum membrane. It is found in the host mitochondrion membrane. The protein resides in the virion. The protein localises to the host cytoplasm. It localises to the host nucleus. Its subcellular location is the host lipid droplet. It is found in the virion membrane. The protein resides in the host mitochondrion. The protein localises to the host cell membrane. It localises to the host perinuclear region. It catalyses the reaction Hydrolysis of four peptide bonds in the viral precursor polyprotein, commonly with Asp or Glu in the P6 position, Cys or Thr in P1 and Ser or Ala in P1'.. The enzyme catalyses a ribonucleoside 5'-triphosphate + H2O = a ribonucleoside 5'-diphosphate + phosphate + H(+). It carries out the reaction ATP + H2O = ADP + phosphate + H(+). The catalysed reaction is RNA(n) + a ribonucleoside 5'-triphosphate = RNA(n+1) + diphosphate. Its activity is regulated as follows. Inhibited by the antiviral drug hexamethylene amiloride. Inhibition by amantadine appears to be genotype-dependent. Also inhibited by long-alkyl-chain iminosugar derivatives. With respect to regulation, activity is up-regulated by PRK2/PKN2-mediated phosphorylation. Its function is as follows. Packages viral RNA to form a viral nucleocapsid, and promotes virion budding. Participates in the viral particle production as a result of its interaction with the non-structural protein 5A. Binds RNA and may function as a RNA chaperone to induce the RNA structural rearrangements taking place during virus replication. Modulates viral translation initiation by interacting with viral IRES and 40S ribosomal subunit. Affects various cell signaling pathways, host immunity and lipid metabolism. Prevents the establishment of cellular antiviral state by blocking the interferon-alpha/beta (IFN-alpha/beta) and IFN-gamma signaling pathways and by blocking the formation of phosphorylated STAT1 and promoting ubiquitin-mediated proteasome-dependent degradation of STAT1. Activates STAT3 leading to cellular transformation. Regulates the activity of cellular genes, including c-myc and c-fos. May repress the promoter of p53, and sequester CREB3 and SP110 isoform 3/Sp110b in the cytoplasm. Represses cell cycle negative regulating factor CDKN1A, thereby interrupting an important check point of normal cell cycle regulation. Targets transcription factors involved in the regulation of inflammatory responses and in the immune response: suppresses TNF-induced NF-kappa-B activation, and activates AP-1. Binds to dendritic cells (DCs) via C1QR1, resulting in down-regulation of T-lymphocytes proliferation. Alters lipid metabolism by interacting with hepatocellular proteins involved in lipid accumulation and storage. Induces up-regulation of FAS promoter activity, and thereby contributes to the increased triglyceride accumulation in hepatocytes (steatosis). In terms of biological role, forms a heterodimer with envelope glycoprotein E2, which mediates virus attachment to the host cell, virion internalization through clathrin-dependent endocytosis and fusion with host membrane. Fusion with the host cell is most likely mediated by both E1 and E2, through conformational rearrangements of the heterodimer required for fusion rather than a classical class II fusion mechanism. E1/E2 heterodimer binds host apolipoproteins such as APOB and ApoE thereby forming a lipo-viro-particle (LVP). APOE associated to the LVP allows the initial virus attachment to cell surface receptors such as the heparan sulfate proteoglycans (HSPGs), syndecan-1 (SDC1), syndecan-1 (SDC2), the low-density lipoprotein receptor (LDLR) and scavenger receptor class B type I (SCARB1). The cholesterol transfer activity of SCARB1 allows E2 exposure and binding of E2 to SCARB1 and the tetraspanin CD81. E1/E2 heterodimer binding on CD81 activates the epithelial growth factor receptor (EGFR) signaling pathway. Diffusion of the complex E1-E2-EGFR-SCARB1-CD81 to the cell lateral membrane allows further interaction with Claudin 1 (CLDN1) and occludin (OCLN) to finally trigger HCV entry. Functionally, forms a heterodimer with envelope glycoprotein E1, which mediates virus attachment to the host cell, virion internalization through clathrin-dependent endocytosis and fusion with host membrane. Fusion with the host cell is most likely mediated by both E1 and E2, through conformational rearrangements of the heterodimer required for fusion rather than a classical class II fusion mechanism. The interaction between envelope glycoprotein E2 and host apolipoprotein E/APOE allows the proper assembly, maturation and infectivity of the viral particles. This interaction is probably promoted via the up-regulation of cellular autophagy by the virus. E1/E2 heterodimer binds host apolipoproteins such as APOB and APOE thereby forming a lipo-viro-particle (LVP). APOE associated to the LVP allows the initial virus attachment to cell surface receptors such as the heparan sulfate proteoglycans (HSPGs), syndecan-1 (SDC1), syndecan-1 (SDC2), the low-density lipoprotein receptor (LDLR) and scavenger receptor class B type I (SCARB1). The cholesterol transfer activity of SCARB1 allows E2 exposure and binding of E2 to SCARB1 and the tetraspanin CD81. E1/E2 heterodimer binding on CD81 activates the epithelial growth factor receptor (EGFR) signaling pathway. Diffusion of the complex E1-E2-EGFR-SCARB1-CD81 to the cell lateral membrane allows further interaction with Claudin 1 (CLDN1) and occludin (OCLN) to finally trigger HCV entry. Inhibits host EIF2AK2/PKR activation, preventing the establishment of an antiviral state. Viral ligand for CD209/DC-SIGN and CLEC4M/DC-SIGNR, which are respectively found on dendritic cells (DCs), and on liver sinusoidal endothelial cells and macrophage-like cells of lymph node sinuses. These interactions allow the capture of circulating HCV particles by these cells and subsequent facilitated transmission to permissive cells such as hepatocytes and lymphocyte subpopulations. The interaction between E2 and host amino acid transporter complex formed by SLC3A2 and SLC7A5/LAT1 may facilitate viral entry into host cell. Ion channel protein that acts as a viroporin and plays an essential role in the assembly, envelopment and secretion of viral particles. Regulates the host cell secretory pathway, which induces the intracellular retention of viral glycoproteins and favors assembly of viral particles. Creates a pore in acidic organelles and releases Ca(2+) and H(+) in the cytoplasm of infected cells, leading to a productive viral infection. High levels of cytoplasmic Ca(2+) may trigger membrane trafficking and transport of viral ER-associated proteins to viroplasms, sites of viral genome replication. This ionic imbalance induces the assembly of the inflammasome complex, which triggers the maturation of pro-IL-1beta into IL-1beta through the action of caspase-1. Targets also host mitochondria and induces mitochondrial depolarization. In addition of its role as a viroporin, acts as a lipid raft adhesion factor. Its function is as follows. Cysteine protease required for the proteolytic auto-cleavage between the non-structural proteins NS2 and NS3. The N-terminus of NS3 is required for the function of NS2 protease (active region NS2-3). Promotes the initiation of viral particle assembly by mediating the interaction between structural and non-structural proteins. In terms of biological role, displays three enzymatic activities: serine protease with a chymotrypsin-like fold, NTPase and RNA helicase. NS3 serine protease, in association with NS4A, is responsible for the cleavages of NS3-NS4A, NS4A-NS4B, NS4B-NS5A and NS5A-NS5B. The NS3/NS4A complex prevents phosphorylation of host IRF3, thus preventing the establishment of dsRNA induced antiviral state. The NS3/NS4A complex induces host amino acid transporter component SLC3A2, thus contributing to HCV propagation. NS3 RNA helicase binds to RNA and unwinds both dsDNA and dsRNA in the 3' to 5' direction, and likely resolves RNA complicated stable secondary structures in the template strand. Binds a single ATP and catalyzes the unzipping of a single base pair of dsRNA. Inhibits host antiviral proteins TBK1 and IRF3 thereby preventing the establishment of an antiviral state. Cleaves host MAVS/CARDIF thereby preventing the establishment of an antiviral state. Cleaves host TICAM1/TRIF, thereby disrupting TLR3 signaling and preventing the establishment of an antiviral state. Functionally, peptide cofactor which forms a non-covalent complex with the N-terminal of NS3 serine protease. The NS3/NS4A complex prevents phosphorylation of host IRF3, thus preventing the establishment of dsRNA induced antiviral state. The NS3/NS4A complex induces host amino acid transporter component SLC3A2, thus contributing to HCV propagation. Induces a specific membrane alteration that serves as a scaffold for the virus replication complex. This membrane alteration gives rise to the so-called ER-derived membranous web that contains the replication complex. NS4B self-interaction contributes to its function in membranous web formation. Promotes host TRIF protein degradation in a CASP8-dependent manner thereby inhibiting host TLR3-mediated interferon signaling. Disrupts the interaction between STING and TBK1 contributing to the inhibition of interferon signaling. Its function is as follows. Phosphorylated protein that is indispensable for viral replication and assembly. Both hypo- and hyperphosphorylated states are required for the viral life cycle. The hyperphosphorylated form of NS5A is an inhibitor of viral replication. Involved in RNA-binding and especially in binding to the viral genome. Zinc is essential for RNA-binding. Participates in the viral particle production as a result of its interaction with the mature viral core protein. Its interaction with host VAPB may target the viral replication complex to vesicles. Down-regulates viral IRES translation initiation. Mediates interferon resistance, presumably by interacting with and inhibiting host EIF2AK2/PKR. Prevents BIN1-induced apoptosis. Acts as a transcriptional activator of some host genes important for viral replication when localized in the nucleus. Via the interaction with host PACSIN2, modulates lipid droplet formation in order to promote virion assembly. Modulates TNFRSF21/DR6 signaling pathway for viral propagation. In terms of biological role, RNA-dependent RNA polymerase that performs primer-template recognition and RNA synthesis during viral replication. Initiates RNA transcription/replication at a flavin adenine dinucleotide (FAD), resulting in a 5'- FAD cap on viral RNAs. In this way, recognition of viral 5' RNA by host pattern recognition receptors can be bypassed, thereby evading activation of antiviral pathways. This Hepatitis C virus genotype 6d (isolate VN235) (HCV) protein is Genome polyprotein.